The chain runs to 539 residues: Glutamyl-tRNA(Gln) amidotransferase subunit A, mitochondrial (539 aa).

Active-site charge relay system residues include Lys-94 and Ser-181. The active-site Acyl-ester intermediate is the Ser-205.

It belongs to the amidase family. GatA subfamily. In terms of assembly, subunit of the heterotrimeric GatCAB amidotransferase (AdT) complex, composed of A, B and C subunits.

The protein localises to the mitochondrion. The catalysed reaction is L-glutamyl-tRNA(Gln) + L-glutamine + ATP + H2O = L-glutaminyl-tRNA(Gln) + L-glutamate + ADP + phosphate + H(+). Allows the formation of correctly charged Gln-tRNA(Gln) through the transamidation of misacylated Glu-tRNA(Gln) in the mitochondria. The reaction takes place in the presence of glutamine and ATP through an activated gamma-phospho-Glu-tRNA(Gln). The chain is Glutamyl-tRNA(Gln) amidotransferase subunit A, mitochondrial from Mycosarcoma maydis (Corn smut fungus).